Here is a 419-residue protein sequence, read N- to C-terminus: Peroxisome biogenesis factor 10 (419 aa).

The Peroxisomal matrix portion of the chain corresponds to 1–27 (MPPSEEIKLRAVSPRPDFKANYLEFAN). Residues 28-57 (APAIVRANQKDSYFETVLRDKLQNVIQIFK) form a helical membrane-spanning segment. Position 58 (Gly58) is a topological domain, cytoplasmic. Residues 59–80 (QRFTHTHPEEIGVAAKALYLSL) traverse the membrane as a helical segment. The Peroxisomal matrix segment spans residues 81 to 108 (TTLLGTKTLGEEYVDLIYVSRDGKRIPR). The helical transmembrane segment at 109–141 (YLARAGFIFAYAILPYFLTRLFRRLKSSSTPKD) threads the bilayer. The Cytoplasmic portion of the chain corresponds to 142 to 158 (EVTEEKINKELPISLRI). Residues 159 to 185 (EKYLSNMSYSKVLDTIMNLHIAVFYFS) form a helical membrane-spanning segment. Over 186–215 (GQFYNISKRFFSMRYAFGHKINKERTPNGN) the chain is Peroxisomal matrix. Residues 216–235 (YELLGGLIVLQLVMKSLGGF) form a helical membrane-spanning segment. The Cytoplasmic segment spans residues 236-419 (KGLIGSFTGN…RTLGYFLVVF (184 aa)). Cys298, Cys301, Cys313, His315, Cys318, Cys321, Cys334, and Cys347 together coordinate Zn(2+). An RING-type zinc finger spans residues 298 to 360 (CMLCLSYMTN…FYIPTLNKIC (63 aa)).

This sequence belongs to the pex2/pex10/pex12 family. Component of the peroxisomal translocation complex, composed of at least PEX3, PEX2, PEX10 and PEX12. Interacts with PEX19.

The protein localises to the peroxisome membrane. It carries out the reaction S-ubiquitinyl-[E2 ubiquitin-conjugating enzyme]-L-cysteine + [acceptor protein]-L-lysine = [E2 ubiquitin-conjugating enzyme]-L-cysteine + N(6)-ubiquitinyl-[acceptor protein]-L-lysine.. It participates in protein modification; protein ubiquitination. With respect to regulation, the E3 ubiquitin-protein ligase activity is stimulated by PEX12. Functionally, E3 ubiquitin-protein ligase component of the peroxisomal translocation complex. The two types of peroxisomal matrix targeting signals, PTS1 and PTS2, are first recognized in the cytosol by their receptors PEX5 and PEX7, respectively, which then carry the cargo to the peroxisomal membrane. The peroxisomal targeting signal (PTS) receptor-cargo complexes interact with peroxisomal membrane protein (PMP) components of the docking complex. They have then additional downstream interactions with the translocation complex, leading to the transport of fully folded and oligomerized cargo into the peroxisome matrix. The peroxisomal translocation complex forms the retrotranslocation channel with each subunit contributing transmembrane segments that coassemble into an open channel that specifically allows the passage of PEX5 and PEX20 through the peroxisomal membrane. Specifically catalyzes monoubiquitination of PEX5 and/or PEX20 at 'Cys-6' and 'Cys-8', respectively, a modification that acts as a signal for PEX5 or PEX20 export from peroxisomes to the cytosol, thereby promoting PEX5 and PEX20 recycling. This chain is Peroxisome biogenesis factor 10, found in Komagataella pastoris (Yeast).